A 396-amino-acid chain; its full sequence is Histidine-rich glycoprotein (396 aa).

Cystatin domains are found at residues alanine 1–threonine 102 and asparagine 103–alanine 169. 6 disulfide bridges follow: cysteine 7–cysteine 375, cysteine 56–cysteine 67, cysteine 77–cysteine 92, cysteine 123–cysteine 297, cysteine 137–cysteine 160, and cysteine 212–cysteine 242. An N-linked (GlcNAc...) asparagine; partial glycan is attached at asparagine 70. 2 N-linked (GlcNAc...) asparagine glycosylation sites follow: asparagine 91 and asparagine 122. Residues arginine 176–histidine 322 are disordered. The segment covering glycine 197 to tyrosine 208 has biased composition (basic and acidic residues). N-linked (GlcNAc...) asparagine glycosylation occurs at asparagine 220. The span at leucine 233–proline 246 shows a compositional bias: pro residues. Residues proline 255–histidine 265 are compositionally biased toward basic and acidic residues. Residues proline 266 to histidine 284 are compositionally biased toward basic residues. The segment covering histidine 285–proline 296 has biased composition (basic and acidic residues). Basic residues predominate over residues proline 304–histidine 322. A Phosphoserine modification is found at serine 309.

As to quaternary structure, interacts (via the HRR domain) with TPM1; the interaction appears to contribute to the antiangiogenic properties of the HRR domain. Interacts with THBS1 (via the TSP type I repeats); the interaction blocks the antiangiogenic effect of THBS1 with CD36. Interacts with PLG (via its Kringle domains); the interaction tethers PLG to the cell surface and enhances its activation. Interacts with THBS2; the interaction blocks the antiangiogenic effect of THBS2 with CD36. Interacts with HPSE; the interaction is enhanced at acidic pH, partially inhibits binding of HPSE to cell surface receptors and modulates its enzymatic activity. Interacts (via the HRR domain) with TMP1; the interaction partially mediates the antiangiogenic properties of HRG. Interacts with kappa and lambda light chains of IgG molecules. Interacts with ATP5F1A; the interaction occurs on the surface of T-cells and alters their cell morphology in concert with CONA. Binds IgG molecules containing kappa and lambda light chains and inhibits the formation of insoluble immunoglobulin complexes. Interacts with F12; the interaction, which is enhanced in the presence of zinc ions and inhibited by heparin-binding to HRG, inhibits factor XII autoactivation and contact-initiated coagulation. N-glycosylated. Post-translationally, proteolytic cleavage produces several HRG fragments which are mostly disulfide-linked and, therefore, not released. On platelet activation, may release a 33 kDa antiangiogenic peptide which encompasses the HRR.

It localises to the secreted. Its function is as follows. Plasma glycoprotein that binds a number of ligands such as heme, heparin, heparan sulfate, thrombospondin, plasminogen, and divalent metal ions. Inhibits rosette formation. Acts as an adapter protein and implicated in regulating many processes such as immune complex and pathogen clearance, cell adhesion, angiogenesis, coagulation and fibrinolysis. Mediates clearance of necrotic cells through enhancing the phagocytosis of necrotic cells in a heparan sulfate-dependent pathway. This process can be regulated by the presence of certain HRG ligands such as heparin and zinc ions. Binds to IgG subclasses of immunoglobins containing kappa and lambda light chains with different affinities regulating their clearance and inhibiting the formation of insoluble immune complexes. Tethers plasminogen to the cell surface. Binds T-cells and alters the cell morphology. Modulates angiogenesis by blocking the CD6-mediated antiangiongenic effect of thrombospondins, THBS1 and THBS2. The sequence is that of Histidine-rich glycoprotein (HRG) from Bos taurus (Bovine).